The following is a 363-amino-acid chain: Trans-2,3-enoyl-CoA reductase-like (363 aa).

Serine 37 carries the post-translational modification Phosphoserine. 4 helical membrane-spanning segments follow: residues 143–163 (WTTV…LFYL), 216–235 (NLLK…AYYI), 250–270 (VAIS…INVV), and 311–331 (ISFT…LMSI).

This sequence belongs to the steroid 5-alpha reductase family.

The protein resides in the membrane. It is found in the endoplasmic reticulum. The chain is Trans-2,3-enoyl-CoA reductase-like (TECRL) from Bos taurus (Bovine).